We begin with the raw amino-acid sequence, 91 residues long: MQRNLVVLLFLGMVALSSCGFREKHFQRFVKYAVPESTLRTVLQTVVHKVGKTQFGCPAYQGYCDDHCQDIEKKEGFCHGFKCKCGIPMGF.

An N-terminal signal peptide occupies residues 1–19 (MQRNLVVLLFLGMVALSSC). Residues 54 to 91 (QFGCPAYQGYCDDHCQDIEKKEGFCHGFKCKCGIPMGF) form the BetaSPN-type CS-alpha/beta domain. Intrachain disulfides connect Cys-57–Cys-78, Cys-64–Cys-83, and Cys-68–Cys-85.

Expressed by the venom gland.

The protein resides in the secreted. Functionally, has a low affinity binding to potassium channels of rat brain synaptosomes. Displays weak antibacterial activity against Stenotrophomonas sp. Strongly inhibits the development of the Plasmodium berghei ookinetes. Displays slight hemolytic effect on mouse erythrocytes. Induces cytolysis on Xenopus oocytes at high concentrations. Is not toxic towards mice and towards the insect Tenebrio molitor. This chain is Potassium channel toxin MeuTXK-beta-1, found in Mesobuthus eupeus (Lesser Asian scorpion).